The primary structure comprises 213 residues: MEVLRRSSVFAAEVMEVFDRSPTDKELVSQAKALCRDYINSRLIRAGVSWSKPEHNTPVPGGKLAEVSAILLRLGDELEYIRPNVYRNIARQLNISLHSETVVTDAFLAVAAQIFTAGITWGKVVSLYAVAAGLAVDCVRHAQPAMVHTIVDCLGEFVRKTLVTWLKRRGGWADITKCVVSTDPSLRSHWLVAAVCSFGHFLKAIFFVLLPER.

The BH4 signature appears at 32 to 44; the sequence is KALCRDYINSRLI. The BH3 signature appears at 67 to 83; it reads VSAILLRLGDELEYIRP. A BH1 motif is present at residues 113–132; sequence QIFTAGITWGKVVSLYAVAA. The BH2 motif lies at 165-179; it reads WLKRRGGWADITKCV. Residues 190 to 210 form a helical membrane-spanning segment; sequence WLVAAVCSFGHFLKAIFFVLL.

This sequence belongs to the Bcl-2 family.

Its subcellular location is the membrane. In terms of biological role, may play a role in apoptosis. The chain is Bcl-2-related ovarian killer protein from Gallus gallus (Chicken).